The primary structure comprises 354 residues: 3-dehydroquinate synthase (354 aa).

NAD(+) is bound by residues 61–66 (DGESTK), 119–120 (TT), K132, K141, and 159–162 (FLET). Residues E174, H238, and H254 each coordinate Zn(2+).

Belongs to the sugar phosphate cyclases superfamily. Dehydroquinate synthase family. Requires NAD(+) as cofactor. Co(2+) is required as a cofactor. Zn(2+) serves as cofactor.

Its subcellular location is the cytoplasm. It catalyses the reaction 7-phospho-2-dehydro-3-deoxy-D-arabino-heptonate = 3-dehydroquinate + phosphate. It participates in metabolic intermediate biosynthesis; chorismate biosynthesis; chorismate from D-erythrose 4-phosphate and phosphoenolpyruvate: step 2/7. Its function is as follows. Catalyzes the conversion of 3-deoxy-D-arabino-heptulosonate 7-phosphate (DAHP) to dehydroquinate (DHQ). In Saccharolobus solfataricus (strain ATCC 35092 / DSM 1617 / JCM 11322 / P2) (Sulfolobus solfataricus), this protein is 3-dehydroquinate synthase.